The primary structure comprises 349 residues: Anthranilate phosphoribosyltransferase (349 aa).

5-phospho-alpha-D-ribose 1-diphosphate-binding positions include Gly82, 85–86, 92–95, 110–118, and Ser122; these read GD, NVST, and KHGNRGVSS. Gly82 is a binding site for anthranilate. Ser94 contributes to the Mg(2+) binding site. Residue Asn113 participates in anthranilate binding. Residue Arg168 coordinates anthranilate. Mg(2+) is bound by residues Asp227 and Glu228.

This sequence belongs to the anthranilate phosphoribosyltransferase family. In terms of assembly, homodimer. Requires Mg(2+) as cofactor.

It catalyses the reaction N-(5-phospho-beta-D-ribosyl)anthranilate + diphosphate = 5-phospho-alpha-D-ribose 1-diphosphate + anthranilate. Its pathway is amino-acid biosynthesis; L-tryptophan biosynthesis; L-tryptophan from chorismate: step 2/5. Catalyzes the transfer of the phosphoribosyl group of 5-phosphorylribose-1-pyrophosphate (PRPP) to anthranilate to yield N-(5'-phosphoribosyl)-anthranilate (PRA). The polypeptide is Anthranilate phosphoribosyltransferase (Acinetobacter baumannii (strain SDF)).